Consider the following 131-residue polypeptide: MALMTWTAAEFGTNVGFADDQHKTIFDMVNKLHDTAATGNRSEIGKQLDALIDYVVMHFKSEETEMQKKGYADFAAHKAEHDKLVGVCADLQKKFHAGEAEVNQDTTRFVRDWLVNHIPKVDKLYGPCLSA.

Histidine 22, histidine 58, glutamate 62, histidine 77, histidine 81, histidine 117, and aspartate 122 together coordinate Fe cation.

The protein belongs to the hemerythrin family. As to quaternary structure, monomer.

Its function is as follows. Oxygen-binding protein. May be involved in a storage mechanism or for delivery to oxygen-requiring enzymes. The oxygen-binding site contains two iron atoms. This Methylococcus capsulatus (strain ATCC 33009 / NCIMB 11132 / Bath) protein is Bacteriohemerythrin.